Reading from the N-terminus, the 258-residue chain is L-rhamnose-1-dehydrogenase (258 aa).

The NADP(+) site is built by isoleucine 19, aspartate 68, and asparagine 95. Catalysis depends on proton donor residues serine 147 and tyrosine 161. NADP(+) contacts are provided by tyrosine 161, lysine 165, isoleucine 194, and threonine 196. Catalysis depends on lysine 165, which acts as the Lowers pKa of active site Tyr.

Belongs to the short-chain dehydrogenases/reductases (SDR) family.

The catalysed reaction is L-rhamnofuranose + NAD(+) = L-rhamnono-1,4-lactone + NADH + H(+). Its function is as follows. NAD-dependent dehydrogenase that has high activity with L-rhamnose and L-lyxose, and shows only low activity with L-mannose. Has no activity with NADP. Catalyzes the first step in an alternative pathway for rhamnose utilization that does not involve phosphorylated intermediates. This Scheffersomyces stipitis (strain ATCC 58785 / CBS 6054 / NBRC 10063 / NRRL Y-11545) (Yeast) protein is L-rhamnose-1-dehydrogenase (DHG2).